We begin with the raw amino-acid sequence, 178 residues long: Interleukin-10 (178 aa).

Positions 1-18 (MPGSALLCCLLLLAGVKT) are cleaved as a signal peptide. Residue N29 is glycosylated (N-linked (GlcNAc...) asparagine). 2 disulfides stabilise this stretch: C30/C126 and C80/C132. An N-linked (GlcNAc...) asparagine glycan is attached at N134.

It belongs to the IL-10 family. Homodimer. Interacts with IL10RA and IL10RB.

It localises to the secreted. Major immune regulatory cytokine that acts on many cells of the immune system where it has profound anti-inflammatory functions, limiting excessive tissue disruption caused by inflammation. Mechanistically, IL10 binds to its heterotetrameric receptor comprising IL10RA and IL10RB leading to JAK1 and STAT2-mediated phosphorylation of STAT3. In turn, STAT3 translocates to the nucleus where it drives expression of anti-inflammatory mediators. Targets antigen-presenting cells (APCs) such as macrophages and monocytes and inhibits their release of pro-inflammatory cytokines including granulocyte-macrophage colony-stimulating factor /GM-CSF, granulocyte colony-stimulating factor/G-CSF, IL-1 alpha, IL-1 beta, IL-6, IL-8 and TNF-alpha. Also interferes with antigen presentation by reducing the expression of MHC-class II and co-stimulatory molecules, thereby inhibiting their ability to induce T cell activation. In addition, controls the inflammatory response of macrophages by reprogramming essential metabolic pathways including mTOR signaling. This Rattus norvegicus (Rat) protein is Interleukin-10 (Il10).